The primary structure comprises 265 residues: 2-amino-3,7-dideoxy-D-threo-hept-6-ulosonate synthase (265 aa).

D25 functions as the Proton acceptor in the catalytic mechanism. 1-deoxy-D-threo-hexo-2,5-diulose 6-phosphate contacts are provided by residues 25–29 and 144–146; these read DHGIT and YAR. The active-site Proton donor is Y144. The Schiff-base intermediate with substrate role is filled by K174. 1-deoxy-D-threo-hexo-2,5-diulose 6-phosphate contacts are provided by residues 199 to 200 and 226 to 227; these read GG and GR.

It belongs to the DeoC/FbaB aldolase family. ADHS subfamily. In terms of assembly, homodecamer.

The enzyme catalyses 1-deoxy-D-threo-hexo-2,5-diulose 6-phosphate + L-aspartate 4-semialdehyde = 2,3-dioxopropyl phosphate + 2-amino-2,3,7-trideoxy-D-lyxo-hept-6-ulosonate. Catalyzes a transaldol reaction between 6-deoxy-5-ketofructose 1-phosphate (DKFP) and L-aspartate semialdehyde (ASA) with an elimination of hydroxypyruvaldehyde phosphate to yield 2-amino-3,7-dideoxy-D-threo-hept-6-ulosonate (ADH). Plays a key role in an alternative pathway of the biosynthesis of 3-dehydroquinate (DHQ), which is involved in the canonical pathway for the biosynthesis of aromatic amino acids. The chain is 2-amino-3,7-dideoxy-D-threo-hept-6-ulosonate synthase from Halobacterium salinarum (strain ATCC 700922 / JCM 11081 / NRC-1) (Halobacterium halobium).